Reading from the N-terminus, the 784-residue chain is MVGREDAMGNDEAPPGSKKMFWRSASWSASRTASQVPEGDEQSLNIPCAISSGPSRRCPAAPLTPRSHHNSKARACLPPLQPLAISRRSLDEWPKAGSDDVGEWPHPPTPSGNKTGERLKLDLSSTQQRVTDKSSGLAKREKIAFFDKECSKVADHIYVGGDAVAKDKSILKNNGITHILNCVGFICPEYFKSDFCYRSLWLQDSPSEDITSILYDVFDYFEDVREQSGRIFVHCCQGVSRSTSLVIAYLMWREGQSFDDAFQYVKSARGIADPNMGFACQLLQCQKRVHAFPLSPTSLLRMYKMSPHSPYDPLHLVPKLLNDPCPGSLDSRGAFIIQLPSAIYIWVGRQCETIMEKDAKAAVCQIARYEKVEAPIMVVREGDEPVYYWDAFASILPMIGGSVIKVQPGDRKVDAYNLDFEIFQKAIEGGFVPTLASSNNEHETHLPARENSWSSLKCKFASRFDKGFRYVSKTPLSRVYSDSMMIVHSSGSPSSTTSSSSTASPPFLSPDSVCSTNSGNSLKSFSQSSGRSSLRPSIPPSLTLPKFSSLSLLPSQTSPKESRGVNTFLQPSPNRKASPSLAERRGSLKGSLKLPGLADSNRGTPAFTLHPDDSNDIVFNLEGIRNGDLYPPSDCKGTSVDSDLPEKEIISLISCSKSDRHKSGGDTDSSGQPLACRWPSMEMITKLSRAYLDSESVIAIPLPSDAVGETGSRNLYIWIGKSFSLDNNCSLVDSNKAADTVENVDWVQIGESILCQMDLPKDTPIKIVRESEDQTELLALLSAL.

Disordered stretches follow at residues 1 to 73 and 94 to 118; these read MVGR…NSKA and PKAG…TGER. Low complexity predominate over residues 22–34; it reads WRSASWSASRTAS. Residues threonine 64 and threonine 109 each carry the phosphothreonine modification. The Tyrosine-protein phosphatase domain occupies 149–291; that stretch reads ECSKVADHIY…LLQCQKRVHA (143 aa). Cysteine 235 serves as the catalytic Phosphocysteine intermediate. 235–241 contacts substrate; it reads CCQGVSR. Positions 488 to 586 are disordered; that stretch reads HSSGSPSSTT…ASPSLAERRG (99 aa). Low complexity-rich tracts occupy residues 489-510 and 521-553; these read SSGS…FLSP and SLKS…LSLL. Residues 554-577 are compositionally biased toward polar residues; the sequence is PSQTSPKESRGVNTFLQPSPNRKA. 2 positions are modified to phosphoserine: serine 558 and serine 572.

As to quaternary structure, interacts with MPK6. May interact with MPK3 and MPK4. Post-translationally, phosphorylated on threonine and serine residues by MPK6.

The protein localises to the cytoplasm. The protein resides in the cytosol. It catalyses the reaction O-phospho-L-tyrosyl-[protein] + H2O = L-tyrosyl-[protein] + phosphate. Its function is as follows. Protein-tyrosine-phosphatase that acts as a negative regulator of MPK6 and MPK3 signaling by dephosphorylating and repressing MPK6 and MPK3. Modulates defense response by repressing salicylic acid (SA) production, camalexin biosynthesis and SNC1-mediated responses. Acts as a negative regulator of MPK6-mediated pathogen-associated molecular pattern (PAMP) responses, including MPK6 and MPK3 activation, accumulation of extracellular reactive oxygen species and inhibition of seedling growth. Involved in UV-B stress tolerance. May be involved in salt and genotoxic stress responses. The sequence is that of Protein-tyrosine-phosphatase MKP1 (MKP1) from Arabidopsis thaliana (Mouse-ear cress).